The chain runs to 77 residues: Large ribosomal subunit protein bL28 (77 aa).

The disordered stretch occupies residues 1 to 25; it reads MARVCQVTGKAPMSGNNVSHANNKT.

Belongs to the bacterial ribosomal protein bL28 family.

The sequence is that of Large ribosomal subunit protein bL28 from Paraburkholderia xenovorans (strain LB400).